A 602-amino-acid chain; its full sequence is Beta-(1--&gt;2)glucan export ATP-binding/permease protein NdvA (602 aa).

The ABC transmembrane type-1 domain maps to 21 to 311 (GWTLAVANLL…VVSFVNSLMM (291 aa)). 6 helical membrane passes run 22–42 (WTLA…PVLF), 68–88 (LLAA…TVAL), 146–166 (EHFA…YINW), 167–187 (RLAI…TLVV), 254–274 (VITR…GIAL), and 276–296 (QQGL…TLLI). One can recognise an ABC transporter domain in the interval 345–579 (VEFLDVSFSY…RGRFAELARA (235 aa)). 378-385 (GATGAGKS) is an ATP binding site.

This sequence belongs to the ABC transporter superfamily. Beta-(1--&gt;2)glucan exporter (TC 3.A.1.108.1) family. Homodimer.

It localises to the cell inner membrane. It catalyses the reaction [(1-&gt;2)-beta-D-glucosyl](n)(in) + ATP + H2O = [(1-&gt;2)-beta-D-glucosyl](n)(out) + ADP + phosphate + H(+). Functionally, involved in beta-(1--&gt;2)glucan export. Transmembrane domains (TMD) form a pore in the inner membrane and the ATP-binding domain (NBD) is responsible for energy generation. This is Beta-(1--&gt;2)glucan export ATP-binding/permease protein NdvA from Rhodopseudomonas palustris (strain BisB5).